The following is a 279-amino-acid chain: Pantothenate synthetase (279 aa).

An ATP-binding site is contributed by 26 to 33 (MGNLHEGH). The active-site Proton donor is histidine 33. (R)-pantoate is bound at residue glutamine 57. A beta-alanine-binding site is contributed by glutamine 57. 144 to 147 (GKKD) lines the ATP pocket. Glutamine 150 serves as a coordination point for (R)-pantoate. Residues valine 173 and 181–184 (LSSR) contribute to the ATP site.

This sequence belongs to the pantothenate synthetase family. As to quaternary structure, homodimer.

The protein resides in the cytoplasm. The enzyme catalyses (R)-pantoate + beta-alanine + ATP = (R)-pantothenate + AMP + diphosphate + H(+). It functions in the pathway cofactor biosynthesis; (R)-pantothenate biosynthesis; (R)-pantothenate from (R)-pantoate and beta-alanine: step 1/1. In terms of biological role, catalyzes the condensation of pantoate with beta-alanine in an ATP-dependent reaction via a pantoyl-adenylate intermediate. In Burkholderia lata (strain ATCC 17760 / DSM 23089 / LMG 22485 / NCIMB 9086 / R18194 / 383), this protein is Pantothenate synthetase.